The sequence spans 99 residues: Protein Frey (99 aa).

A helical transmembrane segment spans residues 10-29 (YPRAGLSLFLFYLILAGALL). Residues 60 to 90 (DYGLRPKHPRPGGPRPLLSQAQQRKRDGPNM) form a disordered region.

As to quaternary structure, interacts with SPPL2C (via active sites); the interaction stabilizes FREY1 protein and inhibits SPPL2C proteolytic activity. Interacts with IZUMO1; the interaction retains IZUMO1 at the endoplasmic reticulum membrane and coordinates IZUMO1 complex assembly. Expressed in round spermatids (at protein level).

Its subcellular location is the endoplasmic reticulum membrane. Functionally, key regulator for male fertility expressed transiently in round spermatids where it recruits IZUMO1 at the endoplasmic reticulum (ER) membrane and coordinates the oolemmal binding multimeric complex (IZUMO1 complex) assembly. Upon complete assembly of the IZUMO1 complex, its ER retention is released, facilitating IZUMO1 complex export to the acrosome. Through the interaction with SPPL2C, inhibits its intramembrane protease activity directly accessing the catalytic center of an I-CLiP. This chain is Protein Frey, found in Mus musculus (Mouse).